We begin with the raw amino-acid sequence, 1482 residues long: Cystic fibrosis transmembrane conductance regulator (1482 aa).

Residues 1–77 lie on the Cytoplasmic side of the membrane; the sequence is MQRSPLEKAS…KLINALRRCF (77 aa). The chain crosses the membrane as a helical span at residues 78-98; that stretch reads FWRFMFYGIILYLGEVTKAVQ. In terms of domain architecture, ABC transmembrane type-1 1 spans 81–365; sequence FMFYGIILYL…WAVQTWYDSL (285 aa). Residues 99-122 are Extracellular-facing; sequence PLLLGRIIASYDPDNKAERSIAIY. Residues 123–146 form a helical membrane-spanning segment; it reads LGVGLCLLFIVRTLLLHPAIFGPH. Topologically, residues 147-195 are cytoplasmic; the sequence is HIGMQMRIAMFSLIYKKTLKLSSRVLDKISIGQLVSLLSNNLNKFDEGL. The chain crosses the membrane as a helical span at residues 196–216; sequence ALAHFVWIAPLQVTLLMGLLW. Over 217–222 the chain is Extracellular; it reads ELLQAS. Residues 223-243 traverse the membrane as a helical segment; the sequence is AFCGLAFLVVLALFQAGLGKM. Residues 244–298 lie on the Cytoplasmic side of the membrane; it reads MMKYRDQRAGKINERLVITSEMIENIQSVKAYCWEEAMEKMIENLRQTELKLTRK. A helical transmembrane segment spans residues 299 to 319; the sequence is AAYVRYFNSSAFFFSGLFVVF. The Extracellular portion of the chain corresponds to 320 to 339; it reads LSVLPYALLKGIMLRKIFTT. The chain crosses the membrane as a helical span at residues 340-358; that stretch reads ISFCIVLRMAVTRQFPWAV. The Cytoplasmic portion of the chain corresponds to 359-859; that stretch reads QTWYDSLGAI…YLRYVTVHKS (501 aa). Residues tryptophan 401, serine 434, 458-465, and glutamine 493 contribute to the ATP site; that span reads GSTGAGKT. The region spanning 423-646 is the ABC transporter 1 domain; sequence NGDNSLFFSN…RPDFSSKLMG (224 aa). Cysteine 524 carries the S-palmitoyl cysteine lipid modification. Residues serine 549 and serine 660 each carry the phosphoserine modification. A disordered R region region spans residues 654-832; sequence TAERRNSIIT…EEINEEDLRE (179 aa). Phosphoserine; by PKA is present on serine 670. Residue serine 686 is modified to Phosphoserine. Lysine 688 participates in a covalent cross-link: Glycyl lysine isopeptide (Lys-Gly) (interchain with G-Cter in ubiquitin). Serine 700 and serine 712 each carry phosphoserine. Threonine 717 bears the Phosphothreonine mark. Residues serine 737, serine 768, serine 791, serine 796, and serine 814 each carry the phosphoserine modification. Residues 860-880 form a helical membrane-spanning segment; sequence LIFVLIWCLVVFLAEVAACLV. The ABC transmembrane type-1 2 domain maps to 860 to 1156; sequence LIFVLIWCLV…AVNSSIDVDS (297 aa). The Extracellular portion of the chain corresponds to 881–919; the sequence is VLCLLKKTSPQDKGNSTKGANNSYAVIITSTSAYYVFYI. Asparagine 895 and asparagine 901 each carry an N-linked (GlcNAc...) asparagine glycan. A discontinuously helical membrane pass occupies residues 920–940; sequence YVGVADGLLALGLFRGLPLVH. Over 941–991 the chain is Cytoplasmic; sequence TLITVSKILHRKMLHSVLQAPMSTLNTLKAGGILNRFSKDIAVLDDLLPLT. Residues 992–1012 form a helical membrane-spanning segment; sequence IFDFIQLLLIVIGAVAVVSVL. At 1013–1014 the chain is on the extracellular side; that stretch reads KP. Residues 1015-1035 traverse the membrane as a helical segment; that stretch reads YIFLATVPVIVAFILLRAYFL. Residues 1036 to 1096 are Cytoplasmic-facing; the sequence is HTSQQLKQLE…TANWFLYLST (61 aa). The chain crosses the membrane as a helical span at residues 1097-1117; the sequence is LRWFQMRIEMIFVIFFIAVTF. Over 1118–1131 the chain is Extracellular; that stretch reads ISILTTGEGEGTVG. A helical transmembrane segment spans residues 1132-1152; the sequence is IILTLAMNIMSTLQWAVNSSI. Residues 1153-1482 lie on the Cytoplasmic side of the membrane; it reads DVDSLMRSVS…TEEEVQETRL (330 aa). Positions 1212-1445 constitute an ABC transporter 2 domain; it reads MTVKDLTAKY…KSLFRQAISP (234 aa). ATP contacts are provided by residues tyrosine 1221 and 1246 to 1253; that span reads GRTGSGKS. Positions 1388–1482 are interaction with GORASP2; it reads RTLKQAFADC…TEEEVQETRL (95 aa). Residue cysteine 1397 is the site of S-palmitoyl cysteine attachment. Residues 1454–1464 show a composition bias toward basic residues; it reads HRNSSKQRSRS. Residues 1454–1482 are disordered; sequence HRNSSKQRSRSKIAALKEETEEEVQETRL. At serine 1458 the chain carries Phosphoserine. Acidic residues predominate over residues 1472-1482; it reads ETEEEVQETRL. The PDZ-binding signature appears at 1480 to 1482; that stretch reads TRL.

This sequence belongs to the ABC transporter superfamily. ABCC family. CFTR transporter (TC 3.A.1.202) subfamily. Monomer; does not require oligomerization for channel activity. May form oligomers in the membrane. Interacts with SLC26A3, SLC26A6 and NHERF1. Interacts with SHANK2. Interacts with MYO6. Interacts (via C-terminus) with GOPC (via PDZ domain); this promotes CFTR internalization and thereby decreases channel activity. Interacts with SLC4A7 through NHERF1. Found in a complex with MYO5B and RAB11A. Interacts with ANO1. Interacts with SLC26A8. Interacts with AHCYL1; the interaction increases CFTR activity. Interacts with CSE1L. The core-glycosylated form interacts with GORASP2 (via PDZ GRASP-type 1 domain) in respone to ER stress. Interacts with MARCHF2; the interaction leads to CFTR ubiqtuitination and degradation. Interacts with ADGRG2. N-glycosylated. Post-translationally, phosphorylated; cAMP treatment promotes phosphorylation and activates the channel. Dephosphorylation decreases the ATPase activity (in vitro). Phosphorylation at PKA sites activates the channel. Phosphorylation at PKC sites enhances the response to phosphorylation by PKA. Phosphorylated by AMPK; this inhibits channel activity. In terms of processing, ubiquitinated, leading to its degradation in the lysosome. Deubiquitination by USP10 in early endosomes enhances its endocytic recycling to the cell membrane. Ubiquitinated by RNF185 during ER stress. Ubiquitinated by MARCHF2.

It localises to the apical cell membrane. The protein resides in the early endosome membrane. It is found in the cell membrane. Its subcellular location is the recycling endosome membrane. The protein localises to the endoplasmic reticulum membrane. It localises to the nucleus. It carries out the reaction ATP + H2O + closed Cl(-) channel = ADP + phosphate + open Cl(-) channel.. It catalyses the reaction chloride(in) = chloride(out). The enzyme catalyses hydrogencarbonate(in) = hydrogencarbonate(out). The catalysed reaction is ATP + H2O = ADP + phosphate + H(+). In terms of biological role, epithelial ion channel that plays an important role in the regulation of epithelial ion and water transport and fluid homeostasis. Mediates the transport of chloride ions across the cell membrane. Possesses an intrinsic ATPase activity and utilizes ATP to gate its channel; the passive flow of anions through the channel is gated by cycles of ATP binding and hydrolysis by the ATP-binding domains. The ion channel is also permeable to HCO(3)(-); selectivity depends on the extracellular chloride concentration. Exerts its function also by modulating the activity of other ion channels and transporters. Contributes to the regulation of the pH and the ion content of the epithelial fluid layer. Modulates the activity of the epithelial sodium channel (ENaC) complex, in part by regulating the cell surface expression of the ENaC complex. May regulate bicarbonate secretion and salvage in epithelial cells by regulating the transporter SLC4A7. Can inhibit the chloride channel activity of ANO1. Plays a role in the chloride and bicarbonate homeostasis during sperm epididymal maturation and capacitation. This Sus scrofa (Pig) protein is Cystic fibrosis transmembrane conductance regulator.